Reading from the N-terminus, the 528-residue chain is Phenylalanine--tRNA ligase alpha subunit (528 aa).

Residues Thr-365 and Phe-444 each coordinate L-phenylalanine. Glu-446 contributes to the Mg(2+) binding site. Position 469 (Phe-469) interacts with L-phenylalanine.

This sequence belongs to the class-II aminoacyl-tRNA synthetase family. Phe-tRNA synthetase alpha subunit type 2 subfamily. In terms of assembly, tetramer of two alpha and two beta subunits. Mg(2+) is required as a cofactor.

It localises to the cytoplasm. It carries out the reaction tRNA(Phe) + L-phenylalanine + ATP = L-phenylalanyl-tRNA(Phe) + AMP + diphosphate + H(+). This chain is Phenylalanine--tRNA ligase alpha subunit, found in Borreliella burgdorferi (strain ATCC 35210 / DSM 4680 / CIP 102532 / B31) (Borrelia burgdorferi).